Here is a 642-residue protein sequence, read N- to C-terminus: Dihydrolipoyllysine-residue acetyltransferase component of pyruvate dehydrogenase complex, mitochondrial (642 aa).

The transit peptide at 1–85 directs the protein to the mitochondrion; it reads MWRVCARRAR…LLGSPSRRSY (85 aa). The segment at 80 to 99 is disordered; the sequence is PSRRSYSLPPHQKVPLPSLS. Lipoyl-binding domains are found at residues 90-166 and 217-293; these read HQKV…CITV and HMQI…CIIV. Phosphoserine is present on Ser99. An N6-lipoyllysine mark is found at Lys131 and Lys258. The disordered stretch occupies residues 313–346; sequence LKPQAAPPAPPPVAAVPPTPQPVAPTPSAAPAGP. Residues 317 to 337 are compositionally biased toward pro residues; the sequence is AAPPAPPPVAAVPPTPQPVAP. The Peripheral subunit-binding (PSBD) domain occupies 351–388; the sequence is FVSPLAKKLAAEKGIDLTQVKGTGPEGRIIKKDIDSFV. Arg456 is a CoA binding site. Lys461 carries the post-translational modification N6-acetyllysine. An N6-succinyllysine modification is found at Lys468. Ser470 is a binding site for CoA. The residue at position 542 (Lys542) is an N6-succinyllysine. CoA contacts are provided by Ser561, Asn562, and Gly586. Catalysis depends on residues His615 and Asp619.

Belongs to the 2-oxoacid dehydrogenase family. Part of the pyruvate dehydrogenase complex (PDHc) that is a multi-enzyme complex composed of multiple copies of three enzymes, pyruvate dehydrogenase (subunits PDH1A and PDHB, E1 component), dihydrolipoamide acetyltransferase (DLAT, E2 component), and dihydrolipoamide dehydrogenase (DLD, E3 component) to which is added an additional protein the E3-binding protein (PDHX, E3BP). In terms of structural architecture, the E2 and E3BP components assemble into a 60meric central core with icosahedral symmetry. The central core is decorated with E1 and E3 proteins. Currently, two alternative models for the E2:E3BP stoichiometry are considered as being either 48:12 (E2(48)-E3BP(12)) or 40:20 (E2(40)-E3BP(20)). Interacts with PDK2 and PDK3. Interacts with SIRT4. Interacts with PDHB. (R)-lipoate serves as cofactor. Delipoylated at Lys-131 and Lys-258 by SIRT4, delipoylation decreases the PHD complex activity.

It localises to the mitochondrion matrix. The catalysed reaction is N(6)-[(R)-dihydrolipoyl]-L-lysyl-[protein] + acetyl-CoA = N(6)-[(R)-S(8)-acetyldihydrolipoyl]-L-lysyl-[protein] + CoA. Its function is as follows. As part of the pyruvate dehydrogenase complex, catalyzes the transfers of an acetyl group to a lipoic acid moiety. The pyruvate dehydrogenase complex, catalyzes the overall conversion of pyruvate to acetyl-CoA and CO(2), and thereby links cytoplasmic glycolysis and the mitochondrial tricarboxylic acid (TCA) cycle. The protein is Dihydrolipoyllysine-residue acetyltransferase component of pyruvate dehydrogenase complex, mitochondrial of Mus musculus (Mouse).